Consider the following 304-residue polypeptide: MNTSELSIAEEIDYEALPSHAPLHSQLLAGAFAGIMEHSLMFPIDALKTRVQAAGLNKAASTGMISQISKISTMEGSMALWKGVQSVILGAGPAHAVYFGTYEFCKARLISPEDMQTHQPMKTALSGTIATIAADALMNPFDTVKQRLQLDTNLRVWNVTKQIYQNEGFAAFYYSYPTTLAMNIPFAAFNFMIYESASKFFNPQNSYNPLIHCLCGGISGATCAALTTPLDCIKTVLQVRGSETVSIEIMKDANTFGRASRAILEVHGWKGFWRGLKPRIVANIPATAISWTAYECAKHFLMKN.

3 Solcar repeats span residues 21–108 (APLH…CKAR), 118–200 (HQPM…ASKF), and 207–300 (YNPL…AKHF). The next 6 helical transmembrane spans lie at 23–41 (LHSQ…HSLM), 83–102 (GVQS…FGTY), 120–139 (PMKT…ALMN), 175–194 (SYPT…FMIY), 209–228 (PLIH…ALTT), and 275–288 (GLKP…PATA).

It belongs to the mitochondrial carrier (TC 2.A.29) family.

It localises to the mitochondrion inner membrane. MRS4 suppresses a mitochondrial splice defect in the first intron of the COB gene. It may act as a carrier, exerting its suppressor activity via modulation of solute concentrations in the mitochondrion (possibly of cations). Not essential. The polypeptide is Mitochondrial RNA-splicing protein MRS4 (MRS4) (Saccharomyces cerevisiae (strain ATCC 204508 / S288c) (Baker's yeast)).